A 289-amino-acid chain; its full sequence is MLRDLFVKKKKYAAIPSEQVRKDVPDGVMTKCPKCKKIMYTKELLKNLKVCVNCGYHHPMNAWERLDSILDEGSFREYDKEMVSVNPLQFPNYEEKLENDRKKTELNEAVVTGEGTIDEMLVVVAVMDSRFRMGSMGSVVGEKIARAVEKAYELQVPFIIFTASGGARMQEGILSLMQMAKTSVALKKYSNAGGLFISVMTHPTTGGVSASFASLGDYNLAEPGALIGFAGRRVIEQTVREKLPEDFQTAEFLLEHGQLDAVVHRNEMRESLRKILEVHQGEGMAVWQN.

The CoA carboxyltransferase N-terminal domain occupies 28 to 289 (VMTKCPKCKK…QGEGMAVWQN (262 aa)). Zn(2+)-binding residues include Cys-32, Cys-35, Cys-51, and Cys-54. Residues 32–54 (CPKCKKIMYTKELLKNLKVCVNC) form a C4-type zinc finger.

It belongs to the AccD/PCCB family. As to quaternary structure, acetyl-CoA carboxylase is a heterohexamer composed of biotin carboxyl carrier protein (AccB), biotin carboxylase (AccC) and two subunits each of ACCase subunit alpha (AccA) and ACCase subunit beta (AccD). Zn(2+) serves as cofactor.

Its subcellular location is the cytoplasm. It catalyses the reaction N(6)-carboxybiotinyl-L-lysyl-[protein] + acetyl-CoA = N(6)-biotinyl-L-lysyl-[protein] + malonyl-CoA. Its pathway is lipid metabolism; malonyl-CoA biosynthesis; malonyl-CoA from acetyl-CoA: step 1/1. In terms of biological role, component of the acetyl coenzyme A carboxylase (ACC) complex. Biotin carboxylase (BC) catalyzes the carboxylation of biotin on its carrier protein (BCCP) and then the CO(2) group is transferred by the transcarboxylase to acetyl-CoA to form malonyl-CoA. In Bacillus cytotoxicus (strain DSM 22905 / CIP 110041 / 391-98 / NVH 391-98), this protein is Acetyl-coenzyme A carboxylase carboxyl transferase subunit beta.